The chain runs to 256 residues: MENVITIKAFEDNYIWLIKDSQSQHCIIVDPGDAAPVLTILEDQKLIVDAILLTHHHYDHIGGVDALLSARDEKISIYSKKKLFDRCRLVNESDTLSFFDGKLSLQVMEVPGHTLDHVAFYNDELLFCGDTLFSGGCGRVFEGSFEQMFKAVSRLALLPENTKVYCAHEYTQNNLIFAHQIEPKNKALLNYIQQVSKKRQQGQPTIPSTIGLEKEINPFLRCQQQTVINKLQSHLGKELNDPLSCFSALRQYKDNF.

Histidine 55, histidine 57, aspartate 59, histidine 60, histidine 113, aspartate 130, and histidine 168 together coordinate Zn(2+).

It belongs to the metallo-beta-lactamase superfamily. Glyoxalase II family. Monomer. It depends on Zn(2+) as a cofactor.

The catalysed reaction is an S-(2-hydroxyacyl)glutathione + H2O = a 2-hydroxy carboxylate + glutathione + H(+). The protein operates within secondary metabolite metabolism; methylglyoxal degradation; (R)-lactate from methylglyoxal: step 2/2. In terms of biological role, thiolesterase that catalyzes the hydrolysis of S-D-lactoyl-glutathione to form glutathione and D-lactic acid. The protein is Hydroxyacylglutathione hydrolase of Psychromonas ingrahamii (strain DSM 17664 / CCUG 51855 / 37).